We begin with the raw amino-acid sequence, 339 residues long: N-acetyl-gamma-glutamyl-phosphate reductase (339 aa).

Cys145 is an active-site residue.

The protein belongs to the NAGSA dehydrogenase family. Type 1 subfamily.

The protein localises to the cytoplasm. The enzyme catalyses N-acetyl-L-glutamate 5-semialdehyde + phosphate + NADP(+) = N-acetyl-L-glutamyl 5-phosphate + NADPH + H(+). Its pathway is amino-acid biosynthesis; L-arginine biosynthesis; N(2)-acetyl-L-ornithine from L-glutamate: step 3/4. Its function is as follows. Catalyzes the NADPH-dependent reduction of N-acetyl-5-glutamyl phosphate to yield N-acetyl-L-glutamate 5-semialdehyde. The polypeptide is N-acetyl-gamma-glutamyl-phosphate reductase (Kosmotoga olearia (strain ATCC BAA-1733 / DSM 21960 / TBF 19.5.1)).